An 88-amino-acid chain; its full sequence is Small ribosomal subunit protein uS17 (88 aa).

This sequence belongs to the universal ribosomal protein uS17 family. In terms of assembly, part of the 30S ribosomal subunit.

One of the primary rRNA binding proteins, it binds specifically to the 5'-end of 16S ribosomal RNA. This chain is Small ribosomal subunit protein uS17, found in Levilactobacillus brevis (strain ATCC 367 / BCRC 12310 / CIP 105137 / JCM 1170 / LMG 11437 / NCIMB 947 / NCTC 947) (Lactobacillus brevis).